We begin with the raw amino-acid sequence, 453 residues long: Ethanolamine ammonia-lyase large subunit (453 aa).

Substrate is bound by residues 160 to 162 (RLQ) and asparagine 193. 2 residues coordinate adenosylcob(III)alamin: proline 194 and glutamine 246. A substrate-binding site is contributed by glutamate 287. Serine 295 provides a ligand contact to adenosylcob(III)alamin. A substrate-binding site is contributed by aspartate 362. Residue methionine 401 participates in adenosylcob(III)alamin binding.

It belongs to the EutB family. In terms of assembly, the basic unit is a heterodimer which dimerizes to form tetramers. The heterotetramers trimerize; 6 large subunits form a core ring with 6 small subunits projecting outwards. Adenosylcob(III)alamin is required as a cofactor.

It localises to the bacterial microcompartment. It catalyses the reaction ethanolamine = acetaldehyde + NH4(+). The protein operates within amine and polyamine degradation; ethanolamine degradation. Its function is as follows. Catalyzes the deamination of various vicinal amino-alcohols to oxo compounds. Allows this organism to utilize ethanolamine as the sole source of nitrogen and carbon in the presence of vitamin B12. The polypeptide is Ethanolamine ammonia-lyase large subunit (Escherichia coli O157:H7).